We begin with the raw amino-acid sequence, 178 residues long: Large ribosomal subunit protein eL20x (178 aa).

The protein belongs to the eukaryotic ribosomal protein eL20 family.

In Arabidopsis thaliana (Mouse-ear cress), this protein is Large ribosomal subunit protein eL20x (RPL18AC).